Here is a 111-residue protein sequence, read N- to C-terminus: uncharacterized protein (111 aa).

The protein resides in the cytoplasm. It localises to the nucleus. This is an uncharacterized protein from Saccharomyces cerevisiae (strain ATCC 204508 / S288c) (Baker's yeast).